A 148-amino-acid chain; its full sequence is UPF0178 protein lpl0088 (148 aa).

Belongs to the UPF0178 family.

In Legionella pneumophila (strain Lens), this protein is UPF0178 protein lpl0088.